Here is a 43-residue protein sequence, read N- to C-terminus: Protein PsbN (43 aa).

The chain crosses the membrane as a helical span at residues 5–27 (TLVAISISGSLVSFTGYALYTAF).

The protein belongs to the PsbN family.

The protein resides in the plastid. Its subcellular location is the chloroplast thylakoid membrane. In terms of biological role, may play a role in photosystem I and II biogenesis. The sequence is that of Protein PsbN from Drimys granadensis.